We begin with the raw amino-acid sequence, 127 residues long: Fluoride-specific ion channel FluC (127 aa).

A run of 2 helical transmembrane segments spans residues 4–24 (WFWI…LSTW) and 36–56 (GTLA…EIAA). Na(+) is bound by residues G75 and T78. The helical transmembrane segment at 100 to 120 (LANIAITLVVCLLAGVLGMVV) threads the bilayer.

This sequence belongs to the fluoride channel Fluc/FEX (TC 1.A.43) family.

It is found in the cell inner membrane. It catalyses the reaction fluoride(in) = fluoride(out). Its activity is regulated as follows. Na(+) is not transported, but it plays an essential structural role and its presence is essential for fluoride channel function. Fluoride-specific ion channel. Important for reducing fluoride concentration in the cell, thus reducing its toxicity. In Sorangium cellulosum (strain So ce56) (Polyangium cellulosum (strain So ce56)), this protein is Fluoride-specific ion channel FluC.